The primary structure comprises 352 residues: UDP-3-O-acylglucosamine N-acyltransferase (352 aa).

Residue His244 is the Proton acceptor of the active site.

This sequence belongs to the transferase hexapeptide repeat family. LpxD subfamily. Homotrimer.

It carries out the reaction a UDP-3-O-[(3R)-3-hydroxyacyl]-alpha-D-glucosamine + a (3R)-hydroxyacyl-[ACP] = a UDP-2-N,3-O-bis[(3R)-3-hydroxyacyl]-alpha-D-glucosamine + holo-[ACP] + H(+). It participates in bacterial outer membrane biogenesis; LPS lipid A biosynthesis. In terms of biological role, catalyzes the N-acylation of UDP-3-O-acylglucosamine using 3-hydroxyacyl-ACP as the acyl donor. Is involved in the biosynthesis of lipid A, a phosphorylated glycolipid that anchors the lipopolysaccharide to the outer membrane of the cell. This chain is UDP-3-O-acylglucosamine N-acyltransferase, found in Anaeromyxobacter sp. (strain Fw109-5).